Reading from the N-terminus, the 450-residue chain is Phospho-2-dehydro-3-deoxyheptonate aldolase (450 aa).

A compositionally biased stretch (polar residues) spans 1–13 (MTVNAKTSPSAGN). Positions 1-20 (MTVNAKTSPSAGNTWRDLPA) are disordered.

It belongs to the class-II DAHP synthase family. As to quaternary structure, homodimer.

The enzyme catalyses D-erythrose 4-phosphate + phosphoenolpyruvate + H2O = 7-phospho-2-dehydro-3-deoxy-D-arabino-heptonate + phosphate. Its pathway is metabolic intermediate biosynthesis; chorismate biosynthesis; chorismate from D-erythrose 4-phosphate and phosphoenolpyruvate: step 1/7. The sequence is that of Phospho-2-dehydro-3-deoxyheptonate aldolase (aroH) from Streptomyces coelicolor (strain ATCC BAA-471 / A3(2) / M145).